The chain runs to 299 residues: MSSIKIECVLPENCRCGESPVWEEASDSLLFVDIPAKKLCRWDSLTKQVQRVTMDAPVSSVALRQSGGYVATIGTKFCALNWEEQSAVVLATVDNDKKNNRFNDGKVDPAGRYFAGTMAEETAPAVLERHQGSLYSLFPDHHVKKYFDQVDISNGLDWSLDHKIFYYIDSLSYSVDAFDYDLQTGQISNRRSVYKLEKEEQIPDGMCIDAEGKLWVACYNGGRVIRLDPVTGKRLQTVKLPVDKTTSCCFGGKNYSEMYVTCARDGMDPEGLLRQPEAGGIFKITGLGVKGIAPYSYAG.

Glu-18 contacts a divalent metal cation. The substrate site is built by Arg-101, Asn-103, and Glu-121. Lys-144 is subject to N6-succinyllysine. A divalent metal cation is bound by residues Asn-154 and Asp-204. The active-site Proton donor/acceptor is the Asp-204. Residues Lys-244 and Lys-253 each carry the N6-succinyllysine modification.

Belongs to the SMP-30/CGR1 family. As to quaternary structure, monomer. The cofactor is Zn(2+). Requires Mn(2+) as cofactor. Ca(2+) is required as a cofactor. It depends on Mg(2+) as a cofactor.

It localises to the cytoplasm. It carries out the reaction D-glucono-1,5-lactone + H2O = D-gluconate + H(+). Functionally, gluconolactonase with low activity towards other sugar lactones, including gulonolactone and galactonolactone. Can also hydrolyze diisopropyl phosphorofluoridate and phenylacetate (in vitro). Calcium-binding protein. Modulates Ca(2+) signaling, and Ca(2+)-dependent cellular processes and enzyme activities. This chain is Regucalcin (RGN), found in Macaca fascicularis (Crab-eating macaque).